Consider the following 182-residue polypeptide: Ribosome-recycling factor (182 aa).

Positions 136–160 (VKKSEKDGDLSEDQSRDEQEKIQKE) are disordered.

The protein belongs to the RRF family.

Its subcellular location is the cytoplasm. In terms of biological role, responsible for the release of ribosomes from messenger RNA at the termination of protein biosynthesis. May increase the efficiency of translation by recycling ribosomes from one round of translation to another. This is Ribosome-recycling factor from Prochlorococcus marinus (strain NATL1A).